We begin with the raw amino-acid sequence, 336 residues long: tRNA (guanine(37)-N(1))-methyltransferase Trm5b (336 aa).

S-adenosyl-L-methionine is bound by residues Arg186, 223 to 224 (DI), 251 to 252 (DV), and Asn265.

The protein belongs to the class I-like SAM-binding methyltransferase superfamily. TRM5/TYW2 family. Monomer.

Its subcellular location is the cytoplasm. The catalysed reaction is guanosine(37) in tRNA + S-adenosyl-L-methionine = N(1)-methylguanosine(37) in tRNA + S-adenosyl-L-homocysteine + H(+). Functionally, specifically methylates the N1 position of guanosine-37 in various tRNAs. The sequence is that of tRNA (guanine(37)-N(1))-methyltransferase Trm5b (trm5b) from Methanocaldococcus jannaschii (strain ATCC 43067 / DSM 2661 / JAL-1 / JCM 10045 / NBRC 100440) (Methanococcus jannaschii).